A 72-amino-acid chain; its full sequence is Small ribosomal subunit protein bS18 (72 aa).

This sequence belongs to the bacterial ribosomal protein bS18 family. As to quaternary structure, part of the 30S ribosomal subunit. Forms a tight heterodimer with protein bS6.

In terms of biological role, binds as a heterodimer with protein bS6 to the central domain of the 16S rRNA, where it helps stabilize the platform of the 30S subunit. In Francisella tularensis subsp. holarctica (strain OSU18), this protein is Small ribosomal subunit protein bS18.